The sequence spans 1140 residues: Receptor-type guanylate cyclase gcy-3 (1140 aa).

The first 21 residues, 1–21 (MKNVFQLLIPLFFHLFSLVSL), serve as a signal peptide directing secretion. Residues 22 to 495 (QNIPVSTGTT…CPLPFWEQYG (474 aa)) are Extracellular-facing. Residues N220, N301, N349, N385, N418, N441, and N459 are each glycosylated (N-linked (GlcNAc...) asparagine). Residues 496–516 (ILIFVGAGVFLIMITTNLICF) form a helical membrane-spanning segment. At 517–1140 (LFMIKNRREE…RQYKMDTLKI (624 aa)) the chain is on the cytoplasmic side. One can recognise a Protein kinase domain in the interval 538 to 826 (FVKLRELERK…NICEQLRDLM (289 aa)). Residues 544–552 (LERKSKGTS) and K582 each bind ATP. In terms of domain architecture, Guanylate cyclase spans 897 to 1027 (TVFFSDVVKF…DTVNTASRME (131 aa)). A disordered region spans residues 1083-1140 (PSISNRSTPPVTQERFTVRAPDTPEARSVSSHGSRPSSNHNNNNDPLYRQYKMDTLKI). The segment covering 1084-1097 (SISNRSTPPVTQER) has biased composition (polar residues). A compositionally biased stretch (low complexity) spans 1109–1126 (RSVSSHGSRPSSNHNNNN).

Belongs to the adenylyl cyclase class-4/guanylyl cyclase family. As to expression, expressed asymmetrically in ASE right (ASER) sensory neuron and bilaterally in ASI sensory neurons. Expressed in PVT interneuron.

It is found in the cell membrane. It catalyses the reaction GTP = 3',5'-cyclic GMP + diphosphate. Functionally, guanylate cyclase involved in the production of the second messenger cGMP. The chain is Receptor-type guanylate cyclase gcy-3 from Caenorhabditis elegans.